The primary structure comprises 271 residues: Tryptophan synthase alpha chain (271 aa).

Active-site proton acceptor residues include Glu49 and Asp60.

It belongs to the TrpA family. In terms of assembly, tetramer of two alpha and two beta chains.

The enzyme catalyses (1S,2R)-1-C-(indol-3-yl)glycerol 3-phosphate + L-serine = D-glyceraldehyde 3-phosphate + L-tryptophan + H2O. It participates in amino-acid biosynthesis; L-tryptophan biosynthesis; L-tryptophan from chorismate: step 5/5. Functionally, the alpha subunit is responsible for the aldol cleavage of indoleglycerol phosphate to indole and glyceraldehyde 3-phosphate. The polypeptide is Tryptophan synthase alpha chain (Aromatoleum aromaticum (strain DSM 19018 / LMG 30748 / EbN1) (Azoarcus sp. (strain EbN1))).